A 407-amino-acid chain; its full sequence is Multifunctional CCA protein (407 aa).

ATP is bound by residues Gly-8 and Arg-11. CTP-binding residues include Gly-8 and Arg-11. Mg(2+)-binding residues include Asp-21 and Asp-23. ATP is bound by residues Arg-91, Arg-137, and Arg-140. CTP contacts are provided by Arg-91, Arg-137, and Arg-140. In terms of domain architecture, HD spans 228–329; sequence TGIHTLLVAE…VKIFNKLDVW (102 aa).

Belongs to the tRNA nucleotidyltransferase/poly(A) polymerase family. Bacterial CCA-adding enzyme type 1 subfamily. As to quaternary structure, monomer. Can also form homodimers and oligomers. Mg(2+) serves as cofactor. Requires Ni(2+) as cofactor.

It catalyses the reaction a tRNA precursor + 2 CTP + ATP = a tRNA with a 3' CCA end + 3 diphosphate. The catalysed reaction is a tRNA with a 3' CCA end + 2 CTP + ATP = a tRNA with a 3' CCACCA end + 3 diphosphate. In terms of biological role, catalyzes the addition and repair of the essential 3'-terminal CCA sequence in tRNAs without using a nucleic acid template. Adds these three nucleotides in the order of C, C, and A to the tRNA nucleotide-73, using CTP and ATP as substrates and producing inorganic pyrophosphate. tRNA 3'-terminal CCA addition is required both for tRNA processing and repair. Also involved in tRNA surveillance by mediating tandem CCA addition to generate a CCACCA at the 3' terminus of unstable tRNAs. While stable tRNAs receive only 3'-terminal CCA, unstable tRNAs are marked with CCACCA and rapidly degraded. This chain is Multifunctional CCA protein, found in Vibrio vulnificus (strain CMCP6).